The chain runs to 348 residues: Serine/threonine-protein kinase SBK2 (348 aa).

Positions 1–25 (MPGKQSEEGPAEAGASEDSEEEGLG) are disordered. The Protein kinase domain maps to 62-330 (YEEVRPLGQG…IREHLGRPWR (269 aa)). Residues 68–76 (LGQGCYGRV) and Lys91 each bind ATP. Catalysis depends on Asp183, which acts as the Proton acceptor.

This sequence belongs to the protein kinase superfamily. Ser/Thr protein kinase family. STKL subfamily.

The catalysed reaction is L-seryl-[protein] + ATP = O-phospho-L-seryl-[protein] + ADP + H(+). It catalyses the reaction L-threonyl-[protein] + ATP = O-phospho-L-threonyl-[protein] + ADP + H(+). The sequence is that of Serine/threonine-protein kinase SBK2 (SBK2) from Homo sapiens (Human).